Reading from the N-terminus, the 1360-residue chain is DNA-directed RNA polymerase subunit beta (1360 aa).

This sequence belongs to the RNA polymerase beta chain family. In terms of assembly, the RNAP catalytic core consists of 2 alpha, 1 beta, 1 beta' and 1 omega subunit. When a sigma factor is associated with the core the holoenzyme is formed, which can initiate transcription.

The catalysed reaction is RNA(n) + a ribonucleoside 5'-triphosphate = RNA(n+1) + diphosphate. In terms of biological role, DNA-dependent RNA polymerase catalyzes the transcription of DNA into RNA using the four ribonucleoside triphosphates as substrates. The sequence is that of DNA-directed RNA polymerase subunit beta from Ruthia magnifica subsp. Calyptogena magnifica.